The sequence spans 501 residues: Glycerol kinase (501 aa).

Thr17 serves as a coordination point for ADP. The ATP site is built by Thr17, Thr18, and Ser19. Thr17 provides a ligand contact to sn-glycerol 3-phosphate. Arg21 is a binding site for ADP. 4 residues coordinate sn-glycerol 3-phosphate: Arg87, Glu88, Tyr139, and Asp243. Glycerol-binding residues include Arg87, Glu88, Tyr139, Asp243, and Gln244. Residues Thr265 and Gly308 each contribute to the ADP site. 4 residues coordinate ATP: Thr265, Gly308, Gln312, and Gly409. Residues Gly409 and Asn413 each coordinate ADP.

The protein belongs to the FGGY kinase family.

It catalyses the reaction glycerol + ATP = sn-glycerol 3-phosphate + ADP + H(+). Its pathway is polyol metabolism; glycerol degradation via glycerol kinase pathway; sn-glycerol 3-phosphate from glycerol: step 1/1. Its activity is regulated as follows. Inhibited by fructose 1,6-bisphosphate (FBP). In terms of biological role, key enzyme in the regulation of glycerol uptake and metabolism. Catalyzes the phosphorylation of glycerol to yield sn-glycerol 3-phosphate. This Pseudomonas fluorescens (strain ATCC BAA-477 / NRRL B-23932 / Pf-5) protein is Glycerol kinase.